A 222-amino-acid chain; its full sequence is MRLILPADTEGIFLERKSRFTGVALVEGKKTLIHIHNTGRLPLLKKGKRVLLKRAESDRRKTGWDLLAVEHRNEFVFVHSGFHSIVAGKILEELFPGSTIESEKRFENSRFDFLIDRRTFVEVKGCTYEEDGVAMFPDAPTGRGRRHIEELIRSVKSGFKALLLILVFLESDCFLPNRSVDPAFSEIFWRALNSGVNIDVFRVKYDGEYLCSTEKLSICEEV.

Belongs to the SfsA family.

This chain is Sugar fermentation stimulation protein homolog, found in Thermotoga maritima (strain ATCC 43589 / DSM 3109 / JCM 10099 / NBRC 100826 / MSB8).